Here is a 366-residue protein sequence, read N- to C-terminus: Bacteriochlorophyll a protein (366 aa).

His-111, His-146, His-290, His-297, and His-298 together coordinate bacteriochlorophyll a.

Homotrimer. Each subunit contains 7 molecules of bacteriochlorophyll a.

Its function is as follows. Intermediary in the transfer of excitation energy from the chlorophyll to the reaction centers. The sequence is that of Bacteriochlorophyll a protein (fmoA) from Chlorobaculum tepidum (strain ATCC 49652 / DSM 12025 / NBRC 103806 / TLS) (Chlorobium tepidum).